The chain runs to 1373 residues: DNA-directed RNA polymerase subunit beta (1373 aa).

It belongs to the RNA polymerase beta chain family. The RNAP catalytic core consists of 2 alpha, 1 beta, 1 beta' and 1 omega subunit. When a sigma factor is associated with the core the holoenzyme is formed, which can initiate transcription.

It catalyses the reaction RNA(n) + a ribonucleoside 5'-triphosphate = RNA(n+1) + diphosphate. Functionally, DNA-dependent RNA polymerase catalyzes the transcription of DNA into RNA using the four ribonucleoside triphosphates as substrates. The sequence is that of DNA-directed RNA polymerase subunit beta from Rickettsia conorii (strain ATCC VR-613 / Malish 7).